A 549-amino-acid polypeptide reads, in one-letter code: Cilia- and flagella-associated protein 45 (549 aa).

The interval 1–27 (MPLSTAGVLSSASTASNRSRNRPRYRT) is disordered. Coiled-coil stretches lie at residues 119-232 (KEEL…MMEV) and 259-393 (IVEQ…KRNQ). Residues 391–416 (RNQEVADREWRRKEKENAQKKMETEA) form a disordered region.

It belongs to the CFAP45 family. In terms of assembly, microtubule inner protein component of sperm flagellar doublet microtubules. Interacts with AK8; dimerization with AK8 may create a cavity at the interface of the dimer that can accommodate AMP. Interacts with CFAP52. Interacts with ENKUR. Directly interacts with DNALI1. Interacts with DNAH11. Interacts with DNAI1. As to expression, expressed in trachea multiciliated cells.

The protein localises to the cytoplasm. It is found in the cytoskeleton. It localises to the cilium axoneme. The protein resides in the flagellum axoneme. Its subcellular location is the cell projection. The protein localises to the cilium. It is found in the flagellum. Its function is as follows. Microtubule inner protein (MIP) part of the dynein-decorated doublet microtubules (DMTs) in cilia axoneme, which is required for motile cilia beating. It is an AMP-binding protein that may facilitate dynein ATPase-dependent ciliary and flagellar beating via adenine nucleotide homeostasis. May function as a donor of AMP to AK8 and hence promote ADP production. The polypeptide is Cilia- and flagella-associated protein 45 (Bos taurus (Bovine)).